The following is a 99-amino-acid chain: Gibberellin-regulated protein 2 (99 aa).

Positions 1–26 (MAVFRSTLVLLLIIVCLTTYELHVHA) are cleaved as a signal peptide.

This sequence belongs to the GASA family. Post-translationally, six disulfide bonds may be present. As to expression, dry seeds and maturating siliques.

Its subcellular location is the secreted. Functionally, gibberellin-regulated protein that may function in hormonal controlled steps of development such as seed germination, flowering and seed maturation. This chain is Gibberellin-regulated protein 2 (GASA2), found in Arabidopsis thaliana (Mouse-ear cress).